Reading from the N-terminus, the 481-residue chain is UDP-N-acetylmuramate--L-alanine ligase (481 aa).

Residue 123 to 129 coordinates ATP; the sequence is GTHGKTT.

It belongs to the MurCDEF family.

It is found in the cytoplasm. The catalysed reaction is UDP-N-acetyl-alpha-D-muramate + L-alanine + ATP = UDP-N-acetyl-alpha-D-muramoyl-L-alanine + ADP + phosphate + H(+). Its pathway is cell wall biogenesis; peptidoglycan biosynthesis. Its function is as follows. Cell wall formation. The chain is UDP-N-acetylmuramate--L-alanine ligase from Pseudomonas fluorescens (strain SBW25).